Reading from the N-terminus, the 662-residue chain is UPF0313 protein CPF_1407 (662 aa).

The Radical SAM core domain maps to 296–567 (AIEEVKFSIV…AMQRALLQFK (272 aa)). [4Fe-4S] cluster contacts are provided by Cys310, Cys314, and Cys317. Residues 596 to 662 (IRDKNSFGKG…QRSSKGKKRR (67 aa)) are disordered. Residues 618-632 (SRNENSGRRESEDKK) are compositionally biased toward basic and acidic residues. The span at 633–644 (RSSHSKKQRGNK) shows a compositional bias: basic residues.

It belongs to the UPF0313 family. The cofactor is [4Fe-4S] cluster.

This chain is UPF0313 protein CPF_1407, found in Clostridium perfringens (strain ATCC 13124 / DSM 756 / JCM 1290 / NCIMB 6125 / NCTC 8237 / Type A).